A 367-amino-acid polypeptide reads, in one-letter code: C-C chemokine receptor type 9 (367 aa).

The Extracellular segment spans residues 1-46; it reads MVPTEATSLILNPSDDYGYDGTPPMEYDTNLTDYFCEKSHVRQFAG. N-linked (GlcNAc...) asparagine glycosylation occurs at Asn30. 2 cysteine pairs are disulfide-bonded: Cys36/Cys287 and Cys117/Cys196. Residues 47 to 72 form a helical membrane-spanning segment; that stretch reads HFLPPLYWLVFIVGAVGNSLVILVYW. Topologically, residues 73–83 are cytoplasmic; it reads YCTRVKTMTDM. A helical transmembrane segment spans residues 84-107; it reads FLLNLAIADLLFLTTLPFWAIAAA. Over 108–118 the chain is Extracellular; it reads DQWKFQTFMCK. A helical membrane pass occupies residues 119–148; that stretch reads VVNSMYKMNFYSCVLLIMCISVDRYIAIAQ. Over 149 to 157 the chain is Cytoplasmic; sequence AMRAQMWRQ. A helical transmembrane segment spans residues 158-183; that stretch reads KRLLYSKMVCFTIWVMAAALCLPELL. Residues 184–206 are Extracellular-facing; the sequence is YSQVKEEHGTAICTVVYSSNEST. An N-linked (GlcNAc...) asparagine glycan is attached at Asn203. Residues 207–241 traverse the membrane as a helical segment; sequence KLKSAVLTLKVTLGFFLPFVVMACCYAIIIHTLIR. At 242–246 the chain is on the cytoplasmic side; sequence AKKSS. The chain crosses the membrane as a helical span at residues 247–281; the sequence is KHKALKVTITVLTVFVLSQFPHNCVLLVQTIDAYA. Topologically, residues 282 to 288 are extracellular; it reads TFISSCA. A helical transmembrane segment spans residues 289-319; it reads LSIKIDICFQVTQTVAFFHSCLNPVLYVFVG. The Cytoplasmic segment spans residues 320–367; it reads ERFRRDLVKTLKNLGCISQAQWVSFTRREGSLKLSSMLLETTSGALSF.

Belongs to the G-protein coupled receptor 1 family.

It localises to the cell membrane. In terms of biological role, receptor for chemokine SCYA25/TECK. Subsequently transduces a signal by increasing the intracellular calcium ions level. The protein is C-C chemokine receptor type 9 (CCR9) of Ovis aries (Sheep).